The primary structure comprises 539 residues: 2-isopropylmalate synthase (539 aa).

The Pyruvate carboxyltransferase domain maps to 8–269; sequence VLIFDTTLRD…YFNPFFGRPP (262 aa). The Mn(2+) site is built by Asp-17, His-208, His-210, and Asn-244. Positions 408 to 539 are regulatory domain; the sequence is QLKLVQVSCG…DLAKVEKKGI (132 aa).

It belongs to the alpha-IPM synthase/homocitrate synthase family. LeuA type 1 subfamily. Homodimer. Requires Mn(2+) as cofactor.

It is found in the cytoplasm. It carries out the reaction 3-methyl-2-oxobutanoate + acetyl-CoA + H2O = (2S)-2-isopropylmalate + CoA + H(+). The protein operates within amino-acid biosynthesis; L-leucine biosynthesis; L-leucine from 3-methyl-2-oxobutanoate: step 1/4. Catalyzes the condensation of the acetyl group of acetyl-CoA with 3-methyl-2-oxobutanoate (2-ketoisovalerate) to form 3-carboxy-3-hydroxy-4-methylpentanoate (2-isopropylmalate). In Prochlorococcus marinus (strain NATL2A), this protein is 2-isopropylmalate synthase.